Here is a 421-residue protein sequence, read N- to C-terminus: 5-hydroxytryptamine receptor 2 (421 aa).

Residues methionine 1–threonine 21 are Extracellular-facing. Asparagine 11 carries an N-linked (GlcNAc...) asparagine glycan. The helical transmembrane segment at valine 22–valine 42 threads the bilayer. Residues cysteine 43–phenylalanine 59 lie on the Cytoplasmic side of the membrane. Residues phenylalanine 60–alanine 79 form a helical membrane-spanning segment. The Extracellular portion of the chain corresponds to leucine 80–cysteine 95. A disulfide bond links cysteine 95 and cysteine 210. Residues phenylalanine 96–tyrosine 118 traverse the membrane as a helical segment. The Cytoplasmic portion of the chain corresponds to asparagine 119–arginine 138. Residues alanine 139–leucine 160 traverse the membrane as a helical segment. At glutamate 161 to aspartate 213 the chain is on the extracellular side. Residues valine 214 to methionine 234 form a helical membrane-spanning segment. The Cytoplasmic portion of the chain corresponds to leucine 235–threonine 274. A helical transmembrane segment spans residues isoleucine 275 to alanine 295. Residues valine 296 to glutamate 304 lie on the Extracellular side of the membrane. Residues cysteine 305–glycine 325 traverse the membrane as a helical segment. Residues threonine 326–serine 421 lie on the Cytoplasmic side of the membrane.

The protein belongs to the G-protein coupled receptor 1 family. As to expression, central nervous system.

Its subcellular location is the cell membrane. Its function is as follows. This is one of the several different receptors for 5-hydroxytryptamine (serotonin). 5-HT plays important roles in various behavioral and physiological processes in aplysia. These include feeding, locomotion, circadian rhythm, learning and memory, synaptic plasticity, and synaptic growth. This receptor is mediated by G proteins that stimulate phospholipase C. This Aplysia californica (California sea hare) protein is 5-hydroxytryptamine receptor 2 (5HTB2).